The primary structure comprises 1027 residues: Xyloglucanase (1027 aa).

An N-terminal signal peptide occupies residues 1-32 (MKTFLGKKLWMASLAVALAAGSFAALPEMTSA). The Nucleophile role is filled by aspartate 70. 4 BNR repeats span residues 134-143 (RSTDRGDTWQ), 185-196 (WRSSDYGATWSK), 252-262 (YRSTDGGATWT), and 357-367 (FRSKDGGTTWT). The active-site Proton donor is the aspartate 479. 2 BNR repeats span residues 537–545 (SSDGGTNWY) and 717–727 (FRSDDGGASWV). One can recognise a CBM3 domain in the interval 876–1027 (PEGSIRIEMY…SGTLQWGIEP (152 aa)).

This sequence belongs to the glycosyl hydrolase 74 family.

Functionally, hydrolyzes the glucosidic bonds of unbranched Glc residues in tamarind seed xyloglucan, producing XXXG, XLXG, XXLG and XLLG. May have a dual endo- and exo- mode of action towards xyloglucan, or may have an endo-processive mode of action. This Paenibacillus sp protein is Xyloglucanase.